Here is a 244-residue protein sequence, read N- to C-terminus: rRNA adenine N-6-methyltransferase (244 aa).

Residues N11, I13, G38, E59, D84, and N101 each coordinate S-adenosyl-L-methionine.

Belongs to the class I-like SAM-binding methyltransferase superfamily. rRNA adenine N(6)-methyltransferase family.

It catalyses the reaction adenosine(2085) in 23S rRNA + 2 S-adenosyl-L-methionine = N(6)-dimethyladenosine(2085) in 23S rRNA + 2 S-adenosyl-L-homocysteine + 2 H(+). In terms of biological role, this protein produces a dimethylation of the adenine residue at position 2085 in 23S rRNA, resulting in reduced affinity between ribosomes and macrolide-lincosamide-streptogramin B antibiotics. Is involved in erythromycin resistance. In Limosilactobacillus reuteri (Lactobacillus reuteri), this protein is rRNA adenine N-6-methyltransferase (ermGT).